The chain runs to 339 residues: MRVAVDGMGGDHSPSAVVKGCVQALEEFKDIEIYITGPEDILKEAFSKFKYDKERVTFIDAKEVISTNEHPAMAVKKKKDSSLVKALRLVKDNQCEAVISAGSTGAFLTGCTLIVGRIKGVERPALAPVMPGKNGPFMIIDAGANVDSKPSYLVQFAKMGEVYFKSVMDVNNPKVGLVNIGEEEEKGNDLTKATYKLLKEERDINFIGNVEPREVSTGDVDVLVCDGFVGNTVLKMYEGVASTILSMIKSEVKSSFLAKLGVPFLAPALMNLKKKMDYKEYGGAPFLGVKGICVKAHGSSDAKAFKNAIRQARKFHENDLIGKLSEEITKKSFDNQKNI.

The protein belongs to the PlsX family. Homodimer. Probably interacts with PlsY.

It is found in the cytoplasm. The catalysed reaction is a fatty acyl-[ACP] + phosphate = an acyl phosphate + holo-[ACP]. Its pathway is lipid metabolism; phospholipid metabolism. In terms of biological role, catalyzes the reversible formation of acyl-phosphate (acyl-PO(4)) from acyl-[acyl-carrier-protein] (acyl-ACP). This enzyme utilizes acyl-ACP as fatty acyl donor, but not acyl-CoA. The chain is Putative phosphate acyltransferase from Clostridium perfringens (strain 13 / Type A).